A 712-amino-acid polypeptide reads, in one-letter code: 1,4-alpha-glucan branching enzyme GlgB (712 aa).

Catalysis depends on aspartate 397, which acts as the Nucleophile. Catalysis depends on glutamate 450, which acts as the Proton donor.

This sequence belongs to the glycosyl hydrolase 13 family. GlgB subfamily. Monomer.

It catalyses the reaction Transfers a segment of a (1-&gt;4)-alpha-D-glucan chain to a primary hydroxy group in a similar glucan chain.. It functions in the pathway glycan biosynthesis; glycogen biosynthesis. Its function is as follows. Catalyzes the formation of the alpha-1,6-glucosidic linkages in glycogen by scission of a 1,4-alpha-linked oligosaccharide from growing alpha-1,4-glucan chains and the subsequent attachment of the oligosaccharide to the alpha-1,6 position. The chain is 1,4-alpha-glucan branching enzyme GlgB from Bradyrhizobium sp. (strain ORS 278).